Consider the following 353-residue polypeptide: Phosphate acyltransferase (353 aa).

The protein belongs to the PlsX family. In terms of assembly, homodimer. Probably interacts with PlsY.

It is found in the cytoplasm. It catalyses the reaction a fatty acyl-[ACP] + phosphate = an acyl phosphate + holo-[ACP]. The protein operates within lipid metabolism; phospholipid metabolism. Functionally, catalyzes the reversible formation of acyl-phosphate (acyl-PO(4)) from acyl-[acyl-carrier-protein] (acyl-ACP). This enzyme utilizes acyl-ACP as fatty acyl donor, but not acyl-CoA. This is Phosphate acyltransferase from Myxococcus xanthus (strain DK1622).